Reading from the N-terminus, the 880-residue chain is Alanine--tRNA ligase (880 aa).

Residues His-568, His-572, Cys-670, and His-674 each contribute to the Zn(2+) site.

It belongs to the class-II aminoacyl-tRNA synthetase family. Requires Zn(2+) as cofactor.

It localises to the cytoplasm. The enzyme catalyses tRNA(Ala) + L-alanine + ATP = L-alanyl-tRNA(Ala) + AMP + diphosphate. Catalyzes the attachment of alanine to tRNA(Ala) in a two-step reaction: alanine is first activated by ATP to form Ala-AMP and then transferred to the acceptor end of tRNA(Ala). Also edits incorrectly charged Ser-tRNA(Ala) and Gly-tRNA(Ala) via its editing domain. This chain is Alanine--tRNA ligase, found in Ligilactobacillus salivarius (strain UCC118) (Lactobacillus salivarius).